The primary structure comprises 520 residues: DDB1- and CUL4-associated factor 17 (520 aa).

The next 2 membrane-spanning stretches (helical) occupy residues 186–206 (VLLYLAVFRVLPFSLVGILEI) and 222–242 (GILIVMYSSGLVRLYSFQTIA).

Interacts with DDB1, CUL4A and CUL4B. Ubiquitously expressed.

It localises to the membrane. Its subcellular location is the nucleus. The protein resides in the nucleolus. It functions in the pathway protein modification; protein ubiquitination. Its function is as follows. May function as a substrate receptor for CUL4-DDB1 E3 ubiquitin-protein ligase complex. The chain is DDB1- and CUL4-associated factor 17 (DCAF17) from Homo sapiens (Human).